The primary structure comprises 210 residues: Cytidylate kinase (210 aa).

An ATP-binding site is contributed by 7 to 15 (GPAASGKGT).

The protein belongs to the cytidylate kinase family. Type 1 subfamily.

The protein localises to the cytoplasm. The catalysed reaction is CMP + ATP = CDP + ADP. The enzyme catalyses dCMP + ATP = dCDP + ADP. The polypeptide is Cytidylate kinase (Methylobacterium sp. (strain 4-46)).